A 727-amino-acid polypeptide reads, in one-letter code: Kinesin-like protein KIN-14G (727 aa).

Disordered stretches follow at residues 100 to 156, 172 to 194, and 336 to 357; these read QTAP…LHLR, HLSA…SCSR, and LAGG…GATR. Polar residues predominate over residues 114–133; it reads VASSTAGRASRTKSASSTGR. The Kinesin motor domain maps to 381–710; sequence NIRVFCRVRP…LRFAARVNSC (330 aa). 461–468 contributes to the ATP binding site; it reads GQTGSGKT.

The protein belongs to the TRAFAC class myosin-kinesin ATPase superfamily. Kinesin family. KIN-14 subfamily.

The protein is Kinesin-like protein KIN-14G of Oryza sativa subsp. japonica (Rice).